The chain runs to 132 residues: Translation initiation factor 5A (132 aa).

A Hypusine modification is found at Lys37.

Belongs to the eIF-5A family.

It is found in the cytoplasm. Functions by promoting the formation of the first peptide bond. The polypeptide is Translation initiation factor 5A (eif5a) (Methanocaldococcus jannaschii (strain ATCC 43067 / DSM 2661 / JAL-1 / JCM 10045 / NBRC 100440) (Methanococcus jannaschii)).